The sequence spans 777 residues: MNQKTLEKIEFPDIINKLWQKAESFPGKQLALKVRPLSDSKIIEEKLLEVEEGLSYLRFKTVDLSVLSDFSEIFLKLSKESMLTGQEIYRLGQLLKVSKDTFFEISRGAFPRLKQIVKLLFFDEALVKDIERSFWPEGTVKDEASPELKRIRGQIARLKDKMREAVEKYLKEPELAKYLQEPLISVRGDRFVLPVKASYKSQVPGIIHDRSNTGQTLFIEPYSAVEAGNELKTLELQEKEIIEKILKDFTQRLACNLTEIKRTYELLGEIDLIVAKARLALELDAYKPRISENGVLSFKQARHPLLGKKAVPFDLTLGKEFDLLIITGPNTGGKTVTLKTIGILTIMARAGLFIPASPETEIGLFGEVYVDIGDEQSIVQSLSTFSSHLLNLKFILENAREGDLVLLDELGTGTDPREGAALAKAILEELRGKKVKVVATTHTSELAAYAIETERVENASVEFDPESLKPTYRLHIGKPGRSNALYIAQGLGLKEQIIEKAKSFLKEEELKLDKLIFDVEQEKRQLEKAKEEVANLLISLKEKEAKLNDELENLEKTKEEIIRKYREKYQQKLLEIERKGKLVIEEIKEKIKTYEEKNLAKLLEEARQKTKEFSQNFALPFEPIKPYRPKVGETVELVEVGQKAEVLAVGENYAIVQAGIMKLNVSFDQIRPAQKQEKENEKGQVKKAGLELTKKQNFNLELDIRGMNTLEAEPVVEKYLDNAYLAGVEKVRIIHGKGTGALKKFLWDYLREVPFVKKFNFAPQNQGGDGATEVYLK.

Position 328-335 (328-335 (GPNTGGKT)) interacts with ATP. One can recognise a Smr domain in the interval 702–777 (LDIRGMNTLE…GDGATEVYLK (76 aa)).

It belongs to the DNA mismatch repair MutS family. MutS2 subfamily. As to quaternary structure, homodimer. Binds to stalled ribosomes, contacting rRNA.

Endonuclease that is involved in the suppression of homologous recombination and thus may have a key role in the control of bacterial genetic diversity. In terms of biological role, acts as a ribosome collision sensor, splitting the ribosome into its 2 subunits. Detects stalled/collided 70S ribosomes which it binds and splits by an ATP-hydrolysis driven conformational change. Acts upstream of the ribosome quality control system (RQC), a ribosome-associated complex that mediates the extraction of incompletely synthesized nascent chains from stalled ribosomes and their subsequent degradation. Probably generates substrates for RQC. This chain is Endonuclease MutS2, found in Carboxydothermus hydrogenoformans (strain ATCC BAA-161 / DSM 6008 / Z-2901).